Consider the following 335-residue polypeptide: Transcriptional coactivator YAP1-B (335 aa).

Positions 1–13 (MEPGSQQQPSAPG) are enriched in low complexity. The disordered stretch occupies residues 1–21 (MEPGSQQQPSAPGQQPPPVGH). At S30 the chain carries Phosphoserine; by LATS1 and LATS2. Polar residues predominate over residues 114 to 124 (MNQQRLSQSAP). A disordered region spans residues 114-146 (MNQQRLSQSAPVKSPPALQPQSPPSGVLGSGGN). Pro residues predominate over residues 126–136 (KSPPALQPQSP). Residues 137–335 (PSGVLGSGGN…LDKESFLTWL (199 aa)) form a transactivation domain region. Positions 145–173 (GNQQMRLQQLQMEKERLRLKHQELLRQVR) form a coiled coil.

This sequence belongs to the YAP1 family. Post-translationally, phosphorylated by lats1 and lats2; leading to cytoplasmic translocation and inactivation.

It is found in the cytoplasm. Its subcellular location is the nucleus. The protein resides in the cell junction. It localises to the tight junction. The protein localises to the cell membrane. Transcriptional regulator which can act both as a coactivator and a corepressor and is the critical downstream regulatory target in the Hippo signaling pathway that plays a pivotal role in organ size control and tumor suppression by restricting proliferation and promoting apoptosis. Plays a key role in tissue tension and 3D tissue shape by regulating cortical actomyosin network formation. The sequence is that of Transcriptional coactivator YAP1-B from Xenopus laevis (African clawed frog).